Here is a 120-residue protein sequence, read N- to C-terminus: Jacalin-related lectin 39 (120 aa).

Positions 6-120 (SRDHADFVAH…KRTFDFGGFN (115 aa)) constitute a Jacalin-type lectin domain.

Belongs to the jacalin lectin family.

This is Jacalin-related lectin 39 (JAL39) from Arabidopsis thaliana (Mouse-ear cress).